A 599-amino-acid polypeptide reads, in one-letter code: Elongation factor 4 (599 aa).

The tr-type G domain maps to 5–187; it reads SHIRNFSIIA…RLVQSIPAPE (183 aa). Residues 17–22 and 134–137 contribute to the GTP site; these read DHGKST and NKMD.

The protein belongs to the TRAFAC class translation factor GTPase superfamily. Classic translation factor GTPase family. LepA subfamily.

The protein resides in the cell inner membrane. It carries out the reaction GTP + H2O = GDP + phosphate + H(+). In terms of biological role, required for accurate and efficient protein synthesis under certain stress conditions. May act as a fidelity factor of the translation reaction, by catalyzing a one-codon backward translocation of tRNAs on improperly translocated ribosomes. Back-translocation proceeds from a post-translocation (POST) complex to a pre-translocation (PRE) complex, thus giving elongation factor G a second chance to translocate the tRNAs correctly. Binds to ribosomes in a GTP-dependent manner. The protein is Elongation factor 4 of Pseudomonas entomophila (strain L48).